A 347-amino-acid polypeptide reads, in one-letter code: SCA7 domain-containing protein SELMODRAFT_439258 (347 aa).

The N-terminal stretch at 1–13 is a signal peptide; sequence MCFFLSSLCPVVA. The segment at 77–106 is disordered; it reads RAEVGGTGPKVGRPRKLSVYNPREMSDGNP. The region spanning 134 to 201 is the SCA7 domain; that stretch reads QHLPFTVDDL…NNSRKSQQAD (68 aa).

This chain is SCA7 domain-containing protein SELMODRAFT_439258, found in Selaginella moellendorffii (Spikemoss).